We begin with the raw amino-acid sequence, 89 residues long: Small ribosomal subunit protein uS14A (89 aa).

This sequence belongs to the universal ribosomal protein uS14 family. In terms of assembly, part of the 30S ribosomal subunit. Contacts proteins S3 and S10.

Binds 16S rRNA, required for the assembly of 30S particles and may also be responsible for determining the conformation of the 16S rRNA at the A site. This Streptococcus agalactiae serotype Ia (strain ATCC 27591 / A909 / CDC SS700) protein is Small ribosomal subunit protein uS14A.